A 258-amino-acid polypeptide reads, in one-letter code: Imidazole glycerol phosphate synthase subunit HisF (258 aa).

Catalysis depends on residues Asp11 and Asp130.

It belongs to the HisA/HisF family. Heterodimer of HisH and HisF.

Its subcellular location is the cytoplasm. The enzyme catalyses 5-[(5-phospho-1-deoxy-D-ribulos-1-ylimino)methylamino]-1-(5-phospho-beta-D-ribosyl)imidazole-4-carboxamide + L-glutamine = D-erythro-1-(imidazol-4-yl)glycerol 3-phosphate + 5-amino-1-(5-phospho-beta-D-ribosyl)imidazole-4-carboxamide + L-glutamate + H(+). The protein operates within amino-acid biosynthesis; L-histidine biosynthesis; L-histidine from 5-phospho-alpha-D-ribose 1-diphosphate: step 5/9. In terms of biological role, IGPS catalyzes the conversion of PRFAR and glutamine to IGP, AICAR and glutamate. The HisF subunit catalyzes the cyclization activity that produces IGP and AICAR from PRFAR using the ammonia provided by the HisH subunit. This Xanthomonas campestris pv. campestris (strain 8004) protein is Imidazole glycerol phosphate synthase subunit HisF.